The primary structure comprises 478 residues: Phosphatidylinositol 4-kinase type 2-alpha (478 aa).

Methionine 1 bears the N-acetylmethionine mark. The tract at residues 1–57 (MDETSPLVSPERAQPPEYTFPSVSGAHFPQVPGGAVRVAAAGSGPSPPCSPGHDRER) is disordered. Serine 5, serine 9, serine 43, serine 46, and serine 50 each carry phosphoserine. Over residues 31–44 (VPGGAVRVAAAGSG) the composition is skewed to low complexity. Positions 123 to 452 (SIYPERIYQG…VQMPPVIVET (330 aa)) constitute a PI3K/PI4K catalytic domain. The tract at residues 129–135 (IYQGSSG) is G-loop. Residues 130 to 136 (YQGSSGS) and lysine 151 contribute to the ATP site. The segment at 156-158 (EPY) is important for substrate binding. Residues 164–177 (KWTKWLQKLCCPCC) form an important for interaction with membranes region. 4 S-palmitoyl cysteine lipidation sites follow: cysteine 173, cysteine 174, cysteine 176, and cysteine 177. 260 to 263 (QLFV) provides a ligand contact to ATP. An important for interaction with membranes region spans residues 267–275 (KDADYWLRR). The tract at residues 304-312 (RNTDRGNDN) is catalytic loop. Positions 343–363 (AIDNGLAFPLKHPDSWRAYPF) are activation loop. Position 345 (aspartate 345) interacts with ATP. Positions 358–367 (WRAYPFYWAW) are important for interaction with membranes. Residue serine 461 is modified to Phosphoserine.

Belongs to the PI3/PI4-kinase family. Type II PI4K subfamily. In terms of assembly, associates with the BLOC-1 and the AP-3 complexes; the BLOC-1 complex is required for optimal binding of PI4K2A to the AP-3 complex. Interacts with BLOC1S5 and DTNBP1. Interacts with FOS; this interaction may enhance phosphatidylinositol phosphorylation activity. Interacts with ITCH. Interacts with ATG9A. Post-translationally, ubiquitinated by ITCH; this does not lead to proteasomal degradation. In terms of processing, palmitoylated. Palmitoylated by ZDHHC3 and ZDHHC7 in the CCPCC motif. Palmitoylation is cholesterol-dependent, and required for TGN localization. Detected in adult brain, especially in neurons in the cerebellum, brain cortex, dorsal root ganglion and spinal cord (at protein level).

Its subcellular location is the golgi apparatus. It localises to the trans-Golgi network membrane. The protein localises to the membrane raft. The protein resides in the endosome. It is found in the endosome membrane. Its subcellular location is the cytoplasmic vesicle. It localises to the cell projection. The protein localises to the dendrite. The protein resides in the presynaptic cell membrane. It is found in the synapse. Its subcellular location is the synaptosome. It localises to the mitochondrion. The protein localises to the membrane. The protein resides in the cell membrane. It is found in the perikaryon. Its subcellular location is the neuron projection. The enzyme catalyses a 1,2-diacyl-sn-glycero-3-phospho-(1D-myo-inositol) + ATP = a 1,2-diacyl-sn-glycero-3-phospho-(1D-myo-inositol 4-phosphate) + ADP + H(+). Functionally, membrane-bound phosphatidylinositol-4 kinase (PI4-kinase) that catalyzes the phosphorylation of phosphatidylinositol (PI) to phosphatidylinositol 4-phosphate (PI4P), a lipid that plays important roles in endocytosis, Golgi function, protein sorting and membrane trafficking and is required for prolonged survival of neurons. Besides, phosphorylation of phosphatidylinositol (PI) to phosphatidylinositol 4-phosphate (PI4P) is the first committed step in the generation of phosphatidylinositol 4,5-bisphosphate (PIP2), a precursor of the second messenger inositol 1,4,5-trisphosphate (InsP3). The sequence is that of Phosphatidylinositol 4-kinase type 2-alpha (Pi4k2a) from Rattus norvegicus (Rat).